An 85-amino-acid polypeptide reads, in one-letter code: Translation initiation factor IF-1 (85 aa).

Positions 1–72 constitute an S1-like domain; the sequence is MAKEELIEMH…SKGRITFRHI (72 aa).

This sequence belongs to the IF-1 family. Component of the 30S ribosomal translation pre-initiation complex which assembles on the 30S ribosome in the order IF-2 and IF-3, IF-1 and N-formylmethionyl-tRNA(fMet); mRNA recruitment can occur at any time during PIC assembly.

The protein resides in the cytoplasm. Its function is as follows. One of the essential components for the initiation of protein synthesis. Stabilizes the binding of IF-2 and IF-3 on the 30S subunit to which N-formylmethionyl-tRNA(fMet) subsequently binds. Helps modulate mRNA selection, yielding the 30S pre-initiation complex (PIC). Upon addition of the 50S ribosomal subunit IF-1, IF-2 and IF-3 are released leaving the mature 70S translation initiation complex. The sequence is that of Translation initiation factor IF-1 from Polaromonas naphthalenivorans (strain CJ2).